Consider the following 323-residue polypeptide: MSSSLEQLKATGTTVVSDSGDFASIGKYKPQDATTNPSLILAASKKAEYAKLIDVAIDYAKQKGGPIDQQVDDALDRLLVEFGKEILKIIPGKVSTEVDARYSFDTEASVNKALHLIELYGEQGISKDRILIKIAATWEGIKAAEILQRDHGINTNLTLMFSLVQAIGAAEAGAYLISPFVGRILDWFKASTKKEYSKEEDPGVQSVKTIFNYYKKYGYNTIVMGASFRNTGEITELAGCDYLTISPNLLEELLNSNEPVPKKLDASQASSLDIEKKSYINDEALFRFDFNEDQMAVEKLREGISKFAADAVTLKSILKEKLA.

Residue K133 is the Schiff-base intermediate with substrate of the active site.

The protein belongs to the transaldolase family. Type 1 subfamily. Monomer.

The enzyme catalyses D-sedoheptulose 7-phosphate + D-glyceraldehyde 3-phosphate = D-erythrose 4-phosphate + beta-D-fructose 6-phosphate. It functions in the pathway carbohydrate degradation; pentose phosphate pathway; D-glyceraldehyde 3-phosphate and beta-D-fructose 6-phosphate from D-ribose 5-phosphate and D-xylulose 5-phosphate (non-oxidative stage): step 2/3. Its function is as follows. Transaldolase important for the balance of metabolites in the pentose-phosphate pathway. Involved in xylose fermentation to ethanol. The chain is Transaldolase from Fusarium oxysporum f. sp. lycopersici (strain 4287 / CBS 123668 / FGSC 9935 / NRRL 34936) (Fusarium vascular wilt of tomato).